A 56-amino-acid chain; its full sequence is Protein hunchback (56 aa).

C2H2-type zinc fingers lie at residues 1 to 5 (HLRNH), 11 to 33 (FRCD…LKSH), and 39 to 56 (YRCA…SLKL).

It belongs to the hunchback C2H2-type zinc-finger protein family.

It localises to the nucleus. In terms of biological role, gap class segmentation protein that controls development of head structures. This chain is Protein hunchback (hb), found in Locusta migratoria (Migratory locust).